The chain runs to 96 residues: Aspartyl/glutamyl-tRNA(Asn/Gln) amidotransferase subunit C (96 aa).

It belongs to the GatC family. Heterotrimer of A, B and C subunits.

The catalysed reaction is L-glutamyl-tRNA(Gln) + L-glutamine + ATP + H2O = L-glutaminyl-tRNA(Gln) + L-glutamate + ADP + phosphate + H(+). The enzyme catalyses L-aspartyl-tRNA(Asn) + L-glutamine + ATP + H2O = L-asparaginyl-tRNA(Asn) + L-glutamate + ADP + phosphate + 2 H(+). Allows the formation of correctly charged Asn-tRNA(Asn) or Gln-tRNA(Gln) through the transamidation of misacylated Asp-tRNA(Asn) or Glu-tRNA(Gln) in organisms which lack either or both of asparaginyl-tRNA or glutaminyl-tRNA synthetases. The reaction takes place in the presence of glutamine and ATP through an activated phospho-Asp-tRNA(Asn) or phospho-Glu-tRNA(Gln). This is Aspartyl/glutamyl-tRNA(Asn/Gln) amidotransferase subunit C from Exiguobacterium sp. (strain ATCC BAA-1283 / AT1b).